A 269-amino-acid chain; its full sequence is Diaminopimelate epimerase (269 aa).

Substrate is bound by residues asparagine 15, glutamine 49, and asparagine 66. Cysteine 75 functions as the Proton donor in the catalytic mechanism. Residues 76 to 77 (GN), asparagine 155, asparagine 187, and 204 to 205 (ER) each bind substrate. Cysteine 213 functions as the Proton acceptor in the catalytic mechanism. 214-215 (GS) lines the substrate pocket.

The protein belongs to the diaminopimelate epimerase family. In terms of assembly, homodimer.

It localises to the cytoplasm. The enzyme catalyses (2S,6S)-2,6-diaminopimelate = meso-2,6-diaminopimelate. It participates in amino-acid biosynthesis; L-lysine biosynthesis via DAP pathway; DL-2,6-diaminopimelate from LL-2,6-diaminopimelate: step 1/1. Catalyzes the stereoinversion of LL-2,6-diaminopimelate (L,L-DAP) to meso-diaminopimelate (meso-DAP), a precursor of L-lysine and an essential component of the bacterial peptidoglycan. This Rickettsia bellii (strain OSU 85-389) protein is Diaminopimelate epimerase.